Reading from the N-terminus, the 58-residue chain is Small ribosomal subunit protein bS21 (58 aa).

The interval 36-58 (RHHETPVEKYKRKLQQRRRSRRR) is disordered. Residues 45–58 (YKRKLQQRRRSRRR) are compositionally biased toward basic residues.

Belongs to the bacterial ribosomal protein bS21 family.

This is Small ribosomal subunit protein bS21 from Prochlorococcus marinus (strain NATL1A).